The sequence spans 147 residues: Large ribosomal subunit protein uL13 (147 aa).

The tract at residues 127 to 147 (GPEHPHSAQQPKVLEIQGAAR) is disordered.

Belongs to the universal ribosomal protein uL13 family. In terms of assembly, part of the 50S ribosomal subunit.

Functionally, this protein is one of the early assembly proteins of the 50S ribosomal subunit, although it is not seen to bind rRNA by itself. It is important during the early stages of 50S assembly. In Verminephrobacter eiseniae (strain EF01-2), this protein is Large ribosomal subunit protein uL13.